A 276-amino-acid polypeptide reads, in one-letter code: uncharacterized protein (276 aa).

7 helical membrane-spanning segments follow: residues 5-25, 32-52, 64-84, 104-124, 149-169, 193-213, and 244-264; these read TDLI…GMLA, PLVG…GFVG, GVIL…LLAV, AGLA…GLAL, IAVG…VLLP, LWVT…VMLV, and VGIA…GAFF.

This sequence belongs to the monovalent cation:proton antiporter 2 (CPA2) transporter (TC 2.A.37) family.

It is found in the cell membrane. This is an uncharacterized protein from Methylorubrum extorquens (Methylobacterium dichloromethanicum).